Reading from the N-terminus, the 91-residue chain is ATP synthase subunit c 2 (91 aa).

A run of 2 helical transmembrane segments spans residues 4-24 (FSMC…GTGI) and 53-73 (IGLA…LIIL).

Belongs to the ATPase C chain family. As to quaternary structure, F-type ATPases have 2 components, F(1) - the catalytic core - and F(0) - the membrane proton channel. F(1) has five subunits: alpha(3), beta(3), gamma(1), delta(1), epsilon(1). F(0) has three main subunits: a(1), b(2) and c(10-14). The alpha and beta chains form an alternating ring which encloses part of the gamma chain. F(1) is attached to F(0) by a central stalk formed by the gamma and epsilon chains, while a peripheral stalk is formed by the delta and b chains.

Its subcellular location is the cell inner membrane. In terms of biological role, f(1)F(0) ATP synthase produces ATP from ADP in the presence of a proton or sodium gradient. F-type ATPases consist of two structural domains, F(1) containing the extramembraneous catalytic core and F(0) containing the membrane proton channel, linked together by a central stalk and a peripheral stalk. During catalysis, ATP synthesis in the catalytic domain of F(1) is coupled via a rotary mechanism of the central stalk subunits to proton translocation. Key component of the F(0) channel; it plays a direct role in translocation across the membrane. A homomeric c-ring of between 10-14 subunits forms the central stalk rotor element with the F(1) delta and epsilon subunits. This Pelobacter propionicus (strain DSM 2379 / NBRC 103807 / OttBd1) protein is ATP synthase subunit c 2.